We begin with the raw amino-acid sequence, 717 residues long: MADPSTYRPAPGTIPDAPGVYRFHDAEGRVIYVGKAKSLRSRLSSYFADLSGLHPRTRQMVTTATGVRWTVVGTEVEALQLEYSWIKEYDPRFNVRYRDDKSYPVLAVTLHEDFPRLYVTRGPRRKGVRYFGPYAHAWAIRETLDMLLRVFPARTCSAGVFKRHSQIGRPCLLGYIGKCSAPCVGRVDADEHRRIVEDFCDFFAGRTDTLIRKLDREMRQASEELEFERAARLRDDLEALRRAMEKQAVVLGDGTDADVIAFADDELAAAVQVFHIRGGRVRGQRGWVIDKVEETGTAALAERFLTQFYGEQAALAEQADAGGTPVPREVLVPELPPECEAITEWLSGLRGGRVAVRVPQRGDKRALMETVERNAKEAFTQYKLRRAGDLTARSAALQELQDALGLDTAPLRIECIDVSHVQGTDVVASLVVFEDGVPRKSEYRRFAVREGAEGGDVGSIAEVVRRRFARYLKETAPPQEGGNGSAGATAAVENGSTDTVAANGSVGTAAGNGSAHTAAGNGLADTAAGEPEADVAVTPQEAERTGIDPETGRPRKFAYPPNLLVIDGGAPQANAAADALTELGITDVAVIGIAKRLEEVWLPDEAEPVILPRTSEALYLLQRVRDAAHDFAIRYHRQKRSKRMKSSTLDSIPGLGEARRTALLKHFGSLRRLRQATVEEISAVPGFGQRTAETVHAALAAGGGTGESRDNAEGESQ.

The region spanning 16–95 (DAPGVYRFHD…IKEYDPRFNV (80 aa)) is the GIY-YIG domain. The UVR domain occupies 208-243 (DTLIRKLDREMRQASEELEFERAARLRDDLEALRRA). Disordered regions lie at residues 517 to 555 (TAAG…GRPR) and 696 to 717 (HAAL…GESQ). Basic and acidic residues-rich tracts occupy residues 541-553 (EAER…ETGR) and 707-717 (ESRDNAEGESQ).

Belongs to the UvrC family. In terms of assembly, interacts with UvrB in an incision complex.

It is found in the cytoplasm. The UvrABC repair system catalyzes the recognition and processing of DNA lesions. UvrC both incises the 5' and 3' sides of the lesion. The N-terminal half is responsible for the 3' incision and the C-terminal half is responsible for the 5' incision. In Saccharopolyspora erythraea (strain ATCC 11635 / DSM 40517 / JCM 4748 / NBRC 13426 / NCIMB 8594 / NRRL 2338), this protein is UvrABC system protein C.